Consider the following 202-residue polypeptide: Kunitz trypsin inhibitor 7 (202 aa).

The first 25 residues, 1-25, serve as a signal peptide directing secretion; that stretch reads MKTFRSMLISLLLVAITTTSGVVEG. The cysteines at positions 69 and 115 are disulfide-linked. N-linked (GlcNAc...) asparagine glycans are attached at residues Asn93, Asn136, Asn144, and Asn198.

This sequence belongs to the protease inhibitor I3 (leguminous Kunitz-type inhibitor) family.

In terms of biological role, exhibits Kunitz trypsin protease inhibitor activity. This is Kunitz trypsin inhibitor 7 from Arabidopsis thaliana (Mouse-ear cress).